A 117-amino-acid polypeptide reads, in one-letter code: ATP-dependent Clp protease adapter protein ClpS 1 (117 aa).

The disordered stretch occupies residues 1 to 33 (MIAMPVRMQQGSEGDGGGPSRGTSVITRTKPKT).

This sequence belongs to the ClpS family. In terms of assembly, binds to the N-terminal domain of the chaperone ClpA.

Involved in the modulation of the specificity of the ClpAP-mediated ATP-dependent protein degradation. This Rhizobium meliloti (strain 1021) (Ensifer meliloti) protein is ATP-dependent Clp protease adapter protein ClpS 1.